Here is a 160-residue protein sequence, read N- to C-terminus: SKP1-like protein 1A (160 aa).

The segment at 102–160 is interaction with the F-box domain of F-box proteins; sequence ILAANYLNIKNLLDLTCQTVADMIKGKTPEEIRTTFNIKNDFTPEEEEEVRRENQWAFE.

It belongs to the SKP1 family. In terms of assembly, part of a SCF E3 ubiquitin ligase complex composed of SKP1, CUL1, RBX1 (RBX1A or RBX1B) and F-box proteins. Interacts with SKIP1, SKIP2, SKIP3, SKIP4, SKIP6, FIB1/SKIP7, SKIP8, PP2A11/SKIP10, SKIP11, PP2B11/SKIP12, PP2A14/SKIP13, SKIP14, SKIP15, SKIP16, SKIP19/FBL20, SKIP20, PP2B1/SKIP21, SKIP22, SKIP23, SKIP24, SKIP25, TULP10/SKIP26, SKIP27, SKIP28/MEE11, AFR/SKIP29, SKIP30, SKIP31, SKIP32/FBP7, SKIP33, SKIP35, ADO1/ZTL, ADO2/LKP2, ADO3/FKF1, AFR, COI1, DOR, EBF1, EBF2, EID1, ORE9, PP2A13/SKIP9, TIR1, UFO, SKP2A, CPR1/CPR30, FBL17, NUP58, At1g55000, At1g67340, At1g78100, At3g04660, At3g61590, At4g38940 and At5g49610. The SKP1A subunit of the SCF E3 ubiquitin ligase complex can interact directly with KIN10, KIN11 and the proteasome subunit PAD1. This interaction can be disrupted by PRL1. In case of polerovirus infection, part of a SCF P0 complex composed of the viral silencing suppressor P0, SKP1 and CUL1. Interacts with turnip yellows virus P0. Interacts with VBF and Agrobacterium virF. Binds to KIB1. As to expression, accumulates only in meristematic cells. Expressed in inflorescence, shoot and root apical meristems, as well as in developing organs such as gametocytes and seeds. Also detected in cortical layer and epidermis of roots, leaves, pith and vascular bundle of young stem, young floral buds and organ primordia, pollen and through the valve of siliques. Not detectable in mature root tissues.

The protein localises to the nucleus. The protein resides in the cytoplasm. It is found in the cytoskeleton. Its subcellular location is the spindle. It localises to the phragmoplast. Its pathway is protein modification; protein ubiquitination. Its function is as follows. Involved in ubiquitination and subsequent proteasomal degradation of target proteins. Together with CUL1, RBX1 and a F-box protein, it forms a SCF E3 ubiquitin ligase complex. The functional specificity of this complex depends on the type of F-box protein. In the SCF complex, it serves as an adapter that links the F-box protein to CUL1. SCF(UFO) is required for vegetative and floral organ development as well as for male gametogenesis. SCF(TIR1) is involved in auxin signaling pathway. SCF(COI1) regulates responses to jasmonates. SCF(EID1) and SCF(AFR) are implicated in phytochrome A light signaling. SCF(ADO1), SCF(ADO2), SCF(ADO3) are related to the circadian clock. SCF(ORE9) seems to be involved in senescence. SCF(EBF1/EBF2) may regulate ethylene signaling. Plays a role during embryogenesis and early postembryonic development, especially during cell elongation and division. Contributes to the correct chromosome segregation during tetrad formation. This Arabidopsis thaliana (Mouse-ear cress) protein is SKP1-like protein 1A.